The sequence spans 120 residues: Large ribosomal subunit protein uL18 (120 aa).

It belongs to the universal ribosomal protein uL18 family. As to quaternary structure, part of the 50S ribosomal subunit; part of the 5S rRNA/L5/L18/L25 subcomplex. Contacts the 5S and 23S rRNAs.

Its function is as follows. This is one of the proteins that bind and probably mediate the attachment of the 5S RNA into the large ribosomal subunit, where it forms part of the central protuberance. The protein is Large ribosomal subunit protein uL18 of Rhodospirillum rubrum (strain ATCC 11170 / ATH 1.1.1 / DSM 467 / LMG 4362 / NCIMB 8255 / S1).